The following is a 2038-amino-acid chain: Homeotic protein female sterile (2038 aa).

Positions Arg34 to Met140 constitute a Bromo 1 domain. The disordered stretch occupies residues Leu145–Gly284. Composition is skewed to low complexity over residues Gly177 to Gln209 and Pro268 to Ala279. The helical transmembrane segment at Ala330 to Ala350 threads the bilayer. The tract at residues Lys396 to Ser432 is disordered. The span at Thr404–Ser421 shows a compositional bias: polar residues. A helical transmembrane segment spans residues Val451 to Ala471. Ser452 carries the post-translational modification Phosphoserine. Residues Glu475–Ile584 enclose the Bromo 2 domain. Disordered stretches follow at residues Ala590–Ala655 and Glu677–Gly735. Over residues Ala593–Gly619 the composition is skewed to basic residues. Residues Ser636–Ser649 show a composition bias toward acidic residues. A compositionally biased stretch (basic residues) spans Lys681 to Ser694. Residues Thr711–Gly735 are compositionally biased toward gly residues. The next 3 helical transmembrane spans lie at Leu750 to Val770, Met790 to Ala810, and Ala816 to Gly830. Disordered stretches follow at residues Gly832 to Gly858, Ala891 to Glu956, Cys1016 to Leu1139, Ala1217 to Ala1260, Gln1384 to Gln1416, Met1502 to His1530, Ile1580 to Ala1616, Trp1645 to Ala1728, Ala1745 to Ile1918, and Met1957 to Asp2023. A helical membrane pass occupies residues Gly874–Ala894. Gly residues predominate over residues Gly910–Ala927. One can recognise an NET domain in the interval Asp942–Lys1024. Ser943 carries the post-translational modification Phosphoserine. Residues Leu1017–Gly1027 are compositionally biased toward basic residues. A compositionally biased stretch (basic and acidic residues) spans Lys1028–Gln1046. Low complexity predominate over residues Ser1079–Ser1100. 2 stretches are compositionally biased toward polar residues: residues Ser1121–Ile1131 and Thr1222–Asn1232. The span at Trp1645 to Ser1665 shows a compositional bias: low complexity. Ser1653 is modified (phosphoserine). Basic and acidic residues predominate over residues Lys1680–Gln1708. Composition is skewed to low complexity over residues Ser1716–Ala1728 and Ala1745–Gly1760. Residues Ile1731–Ala1751 traverse the membrane as a helical segment. The span at Gly1776–Ser1791 shows a compositional bias: basic and acidic residues. The segment covering Asn1800–Pro1813 has biased composition (low complexity). Composition is skewed to gly residues over residues Gly1814 to Gly1828 and Pro1835 to Pro1856. Residues Ala1857–Gly1884 are compositionally biased toward low complexity. Positions Gly1885–Ser1915 are enriched in gly residues. Residues Val1939 to Ser1959 traverse the membrane as a helical segment. A phosphoserine mark is found at Ser1980 and Ser1988. The span at Gln1986–Arg1997 shows a compositional bias: low complexity. A compositionally biased stretch (basic and acidic residues) spans Ala1998–Ala2017.

The protein localises to the membrane. Functionally, required maternally for proper expression of other homeotic genes involved in pattern formation, such as Ubx. The polypeptide is Homeotic protein female sterile (fs(1)h) (Drosophila melanogaster (Fruit fly)).